The chain runs to 292 residues: 11-beta-hydroxysteroid dehydrogenase 1 (292 aa).

The helical transmembrane segment at 7–24 (YLLPILGIFLAYYYYSAN) threads the bilayer.

It belongs to the short-chain dehydrogenases/reductases (SDR) family. As to quaternary structure, homodimer. In terms of tissue distribution, expressed highest in liver and ovaries (corpora lutea, granulosa cells, thecal, uterine caruncle and intercarunculer tissues), lower expression in kidney and spleen, and lowest in the adrenal.

It is found in the endoplasmic reticulum membrane. It carries out the reaction an 11beta-hydroxysteroid + NADP(+) = an 11-oxosteroid + NADPH + H(+). The enzyme catalyses corticosterone + NADP(+) = 11-dehydrocorticosterone + NADPH + H(+). It catalyses the reaction cortisone + NADPH + H(+) = cortisol + NADP(+). The catalysed reaction is a 7beta-hydroxysteroid + NADP(+) = a 7-oxosteroid + NADPH + H(+). It carries out the reaction 7-oxocholesterol + NADPH + H(+) = 7beta-hydroxycholesterol + NADP(+). The enzyme catalyses chenodeoxycholate + NADP(+) = 7-oxolithocholate + NADPH + H(+). It catalyses the reaction 7-oxolithocholate + NADPH + H(+) = ursodeoxycholate + NADP(+). The catalysed reaction is glycochenodeoxycholate + NADP(+) = 7-oxoglycolithocholate + NADPH + H(+). It carries out the reaction taurochenodeoxycholate + NADP(+) = 7-oxotaurolithocholate + NADPH + H(+). The enzyme catalyses tauroursodeoxycholate + NADP(+) = 7-oxotaurolithocholate + NADPH + H(+). It catalyses the reaction glycoursodeoxycholate + NADP(+) = 7-oxoglycolithocholate + NADPH + H(+). The catalysed reaction is 7-oxopregnenolone + NADPH + H(+) = 7beta-hydroxypregnenolone + NADP(+). It carries out the reaction 3beta,7alpha-dihydroxyandrost-5-en-17-one + NADP(+) = 3beta-hydroxy-5-androstene-7,17-dione + NADPH + H(+). The enzyme catalyses 3beta-hydroxy-5-androstene-7,17-dione + NADPH + H(+) = 3beta,7beta-dihydroxyandrost-5-en-17-one + NADP(+). It catalyses the reaction 3beta-hydroxy-5alpha-androstane-7,17-dione + NADPH + H(+) = 3beta,7beta-dihydroxy-5alpha-androstan-17-one + NADP(+). Controls the reversible conversion of biologically active glucocorticoids such as cortisone to cortisol, and 11-dehydrocorticosterone to corticosterone in the presence of NADP(H). Participates in the corticosteroid receptor-mediated anti-inflammatory response, as well as metabolic and homeostatic processes. Plays a role in the secretion of aqueous humor in the eye, maintaining a normotensive, intraocular environment. Bidirectional in vitro, predominantly functions as a reductase in vivo, thereby increasing the concentration of active glucocorticoids. It has broad substrate specificity, besides glucocorticoids, it accepts other steroid and sterol substrates. Interconverts 7-oxo- and 7-hydroxy-neurosteroids such as 7-oxopregnenolone and 7beta-hydroxypregnenolone, 7-oxodehydroepiandrosterone (3beta-hydroxy-5-androstene-7,17-dione) and 7beta-hydroxydehydroepiandrosterone (3beta,7beta-dihydroxyandrost-5-en-17-one), among others. Catalyzes the stereo-specific conversion of the major dietary oxysterol, 7-ketocholesterol (7-oxocholesterol), into the more polar 7-beta-hydroxycholesterol metabolite. 7-oxocholesterol is one of the most important oxysterols, it participates in several events such as induction of apoptosis, accumulation in atherosclerotic lesions, lipid peroxidation, and induction of foam cell formation. Mediates the 7-oxo reduction of 7-oxolithocholate mainly to chenodeoxycholate, and to a lesser extent to ursodeoxycholate, both in its free form and when conjugated to glycine or taurine, providing a link between glucocorticoid activation and bile acid metabolism. Catalyzes the synthesis of 7-beta-25-dihydroxycholesterol from 7-oxo-25-hydroxycholesterol in vitro, which acts as a ligand for the G-protein-coupled receptor (GPCR) Epstein-Barr virus-induced gene 2 (EBI2) and may thereby regulate immune cell migration. The protein is 11-beta-hydroxysteroid dehydrogenase 1 of Bos taurus (Bovine).